A 154-amino-acid chain; its full sequence is Small ribosomal subunit protein uS15 (154 aa).

The segment covering M1 to H11 has biased composition (basic residues). The disordered stretch occupies residues M1–K24.

The protein belongs to the universal ribosomal protein uS15 family. As to quaternary structure, part of the 30S ribosomal subunit.

In Nanoarchaeum equitans (strain Kin4-M), this protein is Small ribosomal subunit protein uS15.